Here is a 400-residue protein sequence, read N- to C-terminus: CCA-adding enzyme (400 aa).

Residues Gly-28 and Arg-31 each contribute to the ATP site. Gly-28 and Arg-31 together coordinate CTP. Mg(2+) contacts are provided by Asp-41 and Asp-43. 5 residues coordinate ATP: Arg-112, Asp-155, Arg-158, Arg-161, and Arg-164. The CTP site is built by Arg-112, Asp-155, Arg-158, Arg-161, and Arg-164.

The protein belongs to the tRNA nucleotidyltransferase/poly(A) polymerase family. Bacterial CCA-adding enzyme type 3 subfamily. As to quaternary structure, homodimer. Mg(2+) is required as a cofactor.

It catalyses the reaction a tRNA precursor + 2 CTP + ATP = a tRNA with a 3' CCA end + 3 diphosphate. The enzyme catalyses a tRNA with a 3' CCA end + 2 CTP + ATP = a tRNA with a 3' CCACCA end + 3 diphosphate. Functionally, catalyzes the addition and repair of the essential 3'-terminal CCA sequence in tRNAs without using a nucleic acid template. Adds these three nucleotides in the order of C, C, and A to the tRNA nucleotide-73, using CTP and ATP as substrates and producing inorganic pyrophosphate. tRNA 3'-terminal CCA addition is required both for tRNA processing and repair. Also involved in tRNA surveillance by mediating tandem CCA addition to generate a CCACCA at the 3' terminus of unstable tRNAs. While stable tRNAs receive only 3'-terminal CCA, unstable tRNAs are marked with CCACCA and rapidly degraded. The protein is CCA-adding enzyme of Staphylococcus aureus (strain COL).